The sequence spans 256 residues: Small ribosomal subunit protein eS1 (256 aa).

Residues 1 to 18 (MAVGKNKRLSKGKKGVKK) show a composition bias toward basic residues. The interval 1 to 20 (MAVGKNKRLSKGKKGVKKRT) is disordered. N-acetylalanine; partial is present on Ala2.

It belongs to the eukaryotic ribosomal protein eS1 family. Component of the small ribosomal subunit. Mature ribosomes consist of a small (40S) and a large (60S) subunit. The 40S subunit contains about 33 different proteins and 1 molecule of RNA (18S). The 60S subunit contains about 49 different proteins and 3 molecules of RNA (25S, 5.8S and 5S).

Its subcellular location is the cytoplasm. This is Small ribosomal subunit protein eS1 (rps1) from Aspergillus clavatus (strain ATCC 1007 / CBS 513.65 / DSM 816 / NCTC 3887 / NRRL 1 / QM 1276 / 107).